Consider the following 345-residue polypeptide: Phenylalanine--tRNA ligase alpha subunit (345 aa).

Glu-266 contributes to the Mg(2+) binding site.

The protein belongs to the class-II aminoacyl-tRNA synthetase family. Phe-tRNA synthetase alpha subunit type 1 subfamily. In terms of assembly, tetramer of two alpha and two beta subunits. The cofactor is Mg(2+).

The protein localises to the cytoplasm. The catalysed reaction is tRNA(Phe) + L-phenylalanine + ATP = L-phenylalanyl-tRNA(Phe) + AMP + diphosphate + H(+). This Methylibium petroleiphilum (strain ATCC BAA-1232 / LMG 22953 / PM1) protein is Phenylalanine--tRNA ligase alpha subunit.